Here is a 119-residue protein sequence, read N- to C-terminus: Holo-[acyl-carrier-protein] synthase (119 aa).

2 residues coordinate Mg(2+): Asp-7 and Glu-56.

The protein belongs to the P-Pant transferase superfamily. AcpS family. Mg(2+) serves as cofactor.

Its subcellular location is the cytoplasm. The catalysed reaction is apo-[ACP] + CoA = holo-[ACP] + adenosine 3',5'-bisphosphate + H(+). Transfers the 4'-phosphopantetheine moiety from coenzyme A to a Ser of acyl-carrier-protein. The protein is Holo-[acyl-carrier-protein] synthase of Chlamydia trachomatis serovar L2 (strain ATCC VR-902B / DSM 19102 / 434/Bu).